Reading from the N-terminus, the 392-residue chain is MAHFNECAHLIEGVDKAQNEYWDILGDEKDPLQVMLDMQRFLQIRLANVREYCYHPDKLETAGDVVSWMREQKDCIDDEFRELLTSLGEMSRGEKEASAVWKKWKARYIEAQEKRIDEMSPEDQLEIKFELVDIFHFVLNMFVGLGMNAEEIFKLYYLKNKHILNVKIMDIKQKFYRTYIVKVRTPKGVFWYAGKHESFIVNPYNDKYPGSGKILWNIYRKYGFNYKIRWSKCHGSREKSYEVERELISALKRKHPDTCINISPGGQGGEGRKWTEQQRLEHKLRLNNPETKTRMKNSQRIAQNRAERKARQSEVMKKFYSNGGNKKISEGTSRAQRKAPHWHEPLKSEIHELWVSLGKPATGPVVKALKGKYDVTSSALKNLIYLFRKEDV.

A disordered region spans residues 322 to 341 (NGGNKKISEGTSRAQRKAPH).

Functionally, may play a role in viral DNA replication. Found associated with a viral DNA origin of replication and with host membranes, may attach this origin to the bacterial envelope to initiate replication. The protein is DNA replication protein (69) of Enterobacteria phage T4 (Bacteriophage T4).